A 98-amino-acid chain; its full sequence is Small ribosomal subunit protein bS6 (98 aa).

This sequence belongs to the bacterial ribosomal protein bS6 family.

Binds together with bS18 to 16S ribosomal RNA. In Levilactobacillus brevis (strain ATCC 367 / BCRC 12310 / CIP 105137 / JCM 1170 / LMG 11437 / NCIMB 947 / NCTC 947) (Lactobacillus brevis), this protein is Small ribosomal subunit protein bS6.